The chain runs to 1368 residues: Indole-3-acetaldehyde oxidase (1368 aa).

The 2Fe-2S ferredoxin-type domain occupies 19 to 108 (TSLVFAINGQ…GCSITTSDGL (90 aa)). [2Fe-2S] cluster contacts are provided by C60, C65, and C68. In terms of domain architecture, FAD-binding PCMH-type spans 246–427 (LHSRKYRWSS…LSLEIPSWHS (182 aa)).

It belongs to the xanthine dehydrogenase family. As to quaternary structure, aldehyde oxidases (AO) are homodimers and heterodimers of AO subunits. AO-alpha is an AAO1 homodimer; AO-beta is an AAO1-AAO2 heterodimer. It depends on [2Fe-2S] cluster as a cofactor. FAD is required as a cofactor. The cofactor is Mo-molybdopterin. As to expression, predominantly expressed in roots, seedlings, mature siliques and seeds, and to lower extent in stems and rosettes. In seedlings, mostly expressed in lower part of hypocotyls and roots.

Its subcellular location is the cytoplasm. The catalysed reaction is indole-3-acetaldehyde + O2 + H2O = (indol-3-yl)acetate + H2O2 + H(+). With respect to regulation, strongly inhibited by iodoacetate and potassium cyanide (KCN). Weakly inhibited by 2-mercaptoethanol, dithiothreitol (DTT), menadione, estradiol, 4'-(9-acridinylamino)methanesulfon-m-anisidine (mAMSA), allopurinol and tritonX-100. Not affected by p-chloromercuribenzoate. Functionally, in higher plants aldehyde oxidases (AO) appear to be homo- and heterodimeric assemblies of AO subunits with probably different physiological functions. AO-alpha may be involved in the biosynthesis of auxin, and in biosynthesis of abscisic acid (ABA) in seeds. In vitro, AO-alpha uses heptaldehyde, protocatechualdehyde, benzaldehyde, indole-3-aldehyde (IAld), indole-3-acetaldehyde (IAAld), cinnamaldehyde and citral as substrates; AO-beta uses IAAld, IAld and naphtaldehyde as substrates. The protein is Indole-3-acetaldehyde oxidase (AAO1) of Arabidopsis thaliana (Mouse-ear cress).